The following is a 680-amino-acid chain: DNA-directed RNA polymerase subunit beta' (680 aa).

Zn(2+) contacts are provided by Cys69, Cys71, Cys87, and Cys90. Mg(2+)-binding residues include Asp489, Asp491, and Asp493.

This sequence belongs to the RNA polymerase beta' chain family. RpoC1 subfamily. As to quaternary structure, in plastids the minimal PEP RNA polymerase catalytic core is composed of four subunits: alpha, beta, beta', and beta''. When a (nuclear-encoded) sigma factor is associated with the core the holoenzyme is formed, which can initiate transcription. Mg(2+) is required as a cofactor. The cofactor is Zn(2+).

The protein localises to the plastid. It is found in the chloroplast. The catalysed reaction is RNA(n) + a ribonucleoside 5'-triphosphate = RNA(n+1) + diphosphate. Functionally, DNA-dependent RNA polymerase catalyzes the transcription of DNA into RNA using the four ribonucleoside triphosphates as substrates. This is DNA-directed RNA polymerase subunit beta' from Olimarabidopsis pumila (Dwarf rocket).